A 515-amino-acid polypeptide reads, in one-letter code: Histidine ammonia-lyase (515 aa).

Positions 145–147 form a cross-link, 5-imidazolinone (Ala-Gly); that stretch reads ASG. The residue at position 146 (Ser146) is a 2,3-didehydroalanine (Ser).

The protein belongs to the PAL/histidase family. Contains an active site 4-methylidene-imidazol-5-one (MIO), which is formed autocatalytically by cyclization and dehydration of residues Ala-Ser-Gly.

The protein localises to the cytoplasm. It catalyses the reaction L-histidine = trans-urocanate + NH4(+). Its pathway is amino-acid degradation; L-histidine degradation into L-glutamate; N-formimidoyl-L-glutamate from L-histidine: step 1/3. This is Histidine ammonia-lyase from Gluconobacter oxydans (strain 621H) (Gluconobacter suboxydans).